The sequence spans 763 residues: Phosphoglycerol transferase I (763 aa).

Transmembrane regions (helical) follow at residues 1-21 (MSEL…AWKA), 26-46 (WWFA…ITLF), 77-97 (ILPG…LGWI), and 108-128 (FGYS…SPAF).

Belongs to the OpgB family.

The protein resides in the cell inner membrane. The catalysed reaction is a phosphatidylglycerol + a membrane-derived-oligosaccharide D-glucose = a 1,2-diacyl-sn-glycerol + a membrane-derived-oligosaccharide 6-(glycerophospho)-D-glucose.. The protein operates within glycan metabolism; osmoregulated periplasmic glucan (OPG) biosynthesis. In terms of biological role, transfers a phosphoglycerol residue from phosphatidylglycerol to the membrane-bound nascent glucan backbones. This is Phosphoglycerol transferase I from Shigella boydii serotype 18 (strain CDC 3083-94 / BS512).